A 276-amino-acid polypeptide reads, in one-letter code: Acyl-[acyl-carrier-protein]--UDP-N-acetylglucosamine O-acyltransferase (276 aa).

The protein belongs to the transferase hexapeptide repeat family. LpxA subfamily. In terms of assembly, homotrimer.

The protein resides in the cytoplasm. The catalysed reaction is a (3R)-hydroxyacyl-[ACP] + UDP-N-acetyl-alpha-D-glucosamine = a UDP-3-O-[(3R)-3-hydroxyacyl]-N-acetyl-alpha-D-glucosamine + holo-[ACP]. Its pathway is glycolipid biosynthesis; lipid IV(A) biosynthesis; lipid IV(A) from (3R)-3-hydroxytetradecanoyl-[acyl-carrier-protein] and UDP-N-acetyl-alpha-D-glucosamine: step 1/6. Involved in the biosynthesis of lipid A, a phosphorylated glycolipid that anchors the lipopolysaccharide to the outer membrane of the cell. In Synechocystis sp. (strain ATCC 27184 / PCC 6803 / Kazusa), this protein is Acyl-[acyl-carrier-protein]--UDP-N-acetylglucosamine O-acyltransferase.